Consider the following 394-residue polypeptide: GDP-mannose transporter (394 aa).

At 1–56 (MSNKKNEDIEMRAVEGANDFGGEKDPFLGRNSPVLRPRGREPTASAYFGKLDNSPG) the chain is on the cytoplasmic side. A helical transmembrane segment spans residues 57-77 (ASIIAYCLSSISMTVVNKYVV). Over 78-81 (SGES) the chain is Lumenal. The chain crosses the membrane as a helical span at residues 82–102 (WNLNFFYLGVQSLVCTIAILL). The Cytoplasmic segment spans residues 103–122 (SRQTGLIKNLAPFDSNKAKR). The helical transmembrane segment at 123-145 (WFPVSLLLVSMIYTGANALQYLS) threads the bilayer. At 146 to 150 (VPVYT) the chain is on the lumenal side. A helical transmembrane segment spans residues 151–168 (IFKNLTIIVIAYGEVLWF). Topologically, residues 169–174 (GGSVTP) are cytoplasmic. Residues 175–199 (LMLLSFGLMVLSSVVAAWADIQAAI) traverse the membrane as a helical segment. Residues 200-207 (DGVGHSAE) are Lumenal-facing. Residues 208–228 (TSAALATLNAGYAWMGLNVVC) traverse the membrane as a helical segment. Residues 229-249 (TSSYLLGMRKVIKKMNFKDYD) lie on the Cytoplasmic side of the membrane. The chain crosses the membrane as a helical span at residues 250 to 270 (SMFYNNLLTIPVLVVCSLLVE). Topologically, residues 271–288 (DWSSENLAKNFPIETRNK) are lumenal. Residues 289–309 (LMVGMIYSGLAAIFISYCSAW) traverse the membrane as a helical segment. At 310-317 (CIRVTSST) the chain is on the cytoplasmic side. Residues 318-338 (TYSMVGALNKLPIAISGLIFF) traverse the membrane as a helical segment. At 339-341 (DAP) the chain is on the lumenal side. The chain crosses the membrane as a helical span at residues 342–362 (ITFGSITAIAVGFVSGLVFAW). The Cytoplasmic segment spans residues 363–394 (AKVRQKAQEAGLLPTTKPTMSASAQSNRDANS).

Belongs to the TPT transporter family. SLC35D subfamily. In terms of assembly, homooligomer.

The protein resides in the golgi apparatus membrane. The protein localises to the cytoplasmic vesicle membrane. It localises to the endoplasmic reticulum membrane. Functionally, involved in the import of GDP-mannose from the cytoplasm into the Golgi lumen. In Chaetomium globosum (strain ATCC 6205 / CBS 148.51 / DSM 1962 / NBRC 6347 / NRRL 1970) (Soil fungus), this protein is GDP-mannose transporter (VRG4).